The following is a 200-amino-acid chain: Protein GrpE (200 aa).

The segment covering 1 to 25 (MMSKQNKKDWKKFKDEHKEEHKVEN) has biased composition (basic and acidic residues). The disordered stretch occupies residues 1 to 52 (MMSKQNKKDWKKFKDEHKEEHKVENEILEEETDEESQHQEPALGHPSYTALE).

It belongs to the GrpE family. As to quaternary structure, homodimer.

It localises to the cytoplasm. Participates actively in the response to hyperosmotic and heat shock by preventing the aggregation of stress-denatured proteins, in association with DnaK and GrpE. It is the nucleotide exchange factor for DnaK and may function as a thermosensor. Unfolded proteins bind initially to DnaJ; upon interaction with the DnaJ-bound protein, DnaK hydrolyzes its bound ATP, resulting in the formation of a stable complex. GrpE releases ADP from DnaK; ATP binding to DnaK triggers the release of the substrate protein, thus completing the reaction cycle. Several rounds of ATP-dependent interactions between DnaJ, DnaK and GrpE are required for fully efficient folding. The polypeptide is Protein GrpE (Legionella pneumophila subsp. pneumophila (strain Philadelphia 1 / ATCC 33152 / DSM 7513)).